The chain runs to 241 residues: Cobalt transport protein CbiM (241 aa).

An N-terminal signal peptide occupies residues 1–23 (MKKNLTFFMVIALLFTITPNVYA). The next 6 membrane-spanning stretches (helical) occupy residues 29-49 (GFLP…FIII), 66-86 (MLLG…IPSV), 98-118 (LSAI…VLIF), 121-141 (ILLA…MGIM), 160-180 (VAVF…TSVQ), and 202-222 (IFSI…VIIF).

It belongs to the CbiM family. As to quaternary structure, forms an energy-coupling factor (ECF) transporter complex composed of an ATP-binding protein (A component, CbiO), a transmembrane protein (T component, CbiQ) and 2 possible substrate-capture proteins (S components, CbiM and CbiN) of unknown stoichimetry.

The protein localises to the cell membrane. It participates in cofactor biosynthesis; adenosylcobalamin biosynthesis. Functionally, part of the energy-coupling factor (ECF) transporter complex CbiMNOQ involved in cobalt import. In Clostridium tetani (strain Massachusetts / E88), this protein is Cobalt transport protein CbiM.